The chain runs to 143 residues: Turripeptide VIII-01 (143 aa).

An N-terminal signal peptide occupies residues 1–23 (MALSLDILMSVTMVTAVLTTVNA). Residues 24 to 32 (EYKDSRLDS) constitute a propeptide that is removed on maturation.

Contains 4 disulfide bonds. Expressed by the venom duct.

The protein localises to the secreted. This chain is Turripeptide VIII-01, found in Gemmula speciosa (Splendid gem-turris).